The primary structure comprises 1690 residues: rRNA biogenesis protein rrp5 (1690 aa).

2 disordered regions span residues 1–42 and 59–90; these read MAGN…GASS and FMES…ELDN. The span at 11–32 shows a compositional bias: polar residues; that stretch reads ASEGSDSQGNERISSLSANEAT. A compositionally biased stretch (basic residues) spans 72-83; it reads KTRPKKKGSKKS. 13 consecutive S1 motif domains span residues 109–209, 226–289, 306–376, 398–473, 490–559, 579–648, 666–739, 761–830, 866–942, 973–1044, 1053–1122, 1147–1216, and 1236–1307; these read GSLI…LSLK, GSMI…LTAT, GDYI…VSFL, GFIV…LSFQ, GQFV…LTLK, GTQT…VGCR, GSVL…LSLK, GIKY…MSFK, GKIT…ISHR, GDEV…IGPL, GSRL…LSAR, GDIC…MSLK, and GSNL…LGLK. Residues 1313–1424 are disordered; sequence SDSDISMSDN…EEKDLDEIPS (112 aa). Composition is skewed to acidic residues over residues 1348–1367, 1390–1400, and 1412–1421; these read QSEE…EEEP, DTEDSEDEEDE, and FDDEEKDLDE. Phosphothreonine is present on Thr1391. Ser1394 carries the phosphoserine modification. 3 HAT repeats span residues 1420–1452, 1526–1558, and 1596–1628; these read DEIP…YHLN, GKVD…FLLN, and GDPE…MEMK. Ser1684 and Ser1686 each carry phosphoserine.

In terms of assembly, component of the ribosomal small subunit (SSU) processome.

It is found in the nucleus. It localises to the nucleolus. Involved in the biogenesis of rRNA. Required for the formation of 18S and 5.8S rRNA. The polypeptide is rRNA biogenesis protein rrp5 (Schizosaccharomyces pombe (strain 972 / ATCC 24843) (Fission yeast)).